The chain runs to 71 residues: Small ribosomal subunit protein bS21 (71 aa).

This sequence belongs to the bacterial ribosomal protein bS21 family.

This chain is Small ribosomal subunit protein bS21, found in Buchnera aphidicola subsp. Baizongia pistaciae (strain Bp).